The chain runs to 644 residues: Exoribonuclease 2 (644 aa).

The RNB domain occupies 189 to 516 (RQDLTALNFV…NHRLLKAVIK (328 aa)). The 83-residue stretch at 561-643 (NTRFAAEIID…ETRSIIARPA (83 aa)) folds into the S1 motif domain.

This sequence belongs to the RNR ribonuclease family. RNase II subfamily.

The protein resides in the cytoplasm. The enzyme catalyses Exonucleolytic cleavage in the 3'- to 5'-direction to yield nucleoside 5'-phosphates.. Its function is as follows. Involved in mRNA degradation. Hydrolyzes single-stranded polyribonucleotides processively in the 3' to 5' direction. In Salmonella gallinarum (strain 287/91 / NCTC 13346), this protein is Exoribonuclease 2.